We begin with the raw amino-acid sequence, 179 residues long: Large ribosomal subunit protein uL5 (179 aa).

The protein belongs to the universal ribosomal protein uL5 family. Part of the 50S ribosomal subunit; part of the 5S rRNA/L5/L18/L25 subcomplex. Contacts the 5S rRNA and the P site tRNA. Forms a bridge to the 30S subunit in the 70S ribosome.

In terms of biological role, this is one of the proteins that bind and probably mediate the attachment of the 5S RNA into the large ribosomal subunit, where it forms part of the central protuberance. In the 70S ribosome it contacts protein S13 of the 30S subunit (bridge B1b), connecting the 2 subunits; this bridge is implicated in subunit movement. Contacts the P site tRNA; the 5S rRNA and some of its associated proteins might help stabilize positioning of ribosome-bound tRNAs. The protein is Large ribosomal subunit protein uL5 of Rhodospirillum rubrum (strain ATCC 11170 / ATH 1.1.1 / DSM 467 / LMG 4362 / NCIMB 8255 / S1).